The following is a 359-amino-acid chain: 4-galactosyl-N-acetylglucosaminide 3-alpha-L-fucosyltransferase FUT6 (359 aa).

Residues 1–14 (MDPLGPAKPQWSCR) are Cytoplasmic-facing. The chain crosses the membrane as a helical; Signal-anchor for type II membrane protein span at residues 15–34 (CCLTTLLFQLLVAVCFFSYL). Residues 35-359 (RVSRDDPTVY…QTRSITAWFT (325 aa)) are Lumenal-facing. N-linked (GlcNAc...) asparagine glycans are attached at residues asparagine 46, asparagine 91, asparagine 153, and asparagine 184. The segment at 73 to 112 (KPTALPRCSEMLPGTADCNITADRKVYPQADAVIVHHREV) is determines site-specific fucosylation.

This sequence belongs to the glycosyltransferase 10 family. In terms of assembly, homodimer and monomer. Monomer (secreted form). Post-translationally, N-glycosylated. Proteolytic cleavage releases a secreted glycoform of 43 kDa.

The protein localises to the golgi apparatus. It is found in the golgi stack membrane. Its subcellular location is the secreted. It catalyses the reaction a beta-D-galactosyl-(1-&gt;4)-N-acetyl-beta-D-glucosaminyl derivative + GDP-beta-L-fucose = a beta-D-galactosyl-(1-&gt;4)-[alpha-L-fucosyl-(1-&gt;3)]-N-acetyl-beta-D-glucosaminyl derivative + GDP + H(+). The enzyme catalyses an N-acetyl-alpha-neuraminyl-(2-&gt;3)-beta-D-galactosyl-(1-&gt;4)-N-acetyl-beta-D-glucosaminyl derivative + GDP-beta-L-fucose = an alpha-Neu5Ac-(2-&gt;3)-beta-D-Gal-(1-&gt;4)-[alpha-L-Fuc-(1-&gt;3)]-beta-D-GlcNAc derivative + GDP + H(+). It carries out the reaction an alpha-Neu5Ac-(2-&gt;3)-beta-D-Gal-(1-&gt;4)-beta-D-GlcNAc-(1-&gt;3)-beta-D-Gal-(1-&gt;4)-[alpha-L-Fuc-(1-&gt;3)]-beta-D-GlcNAc derivative + GDP-beta-L-fucose = an alpha-Neu5Ac-(2-&gt;3)-beta-D-Gal-(1-&gt;4)-[alpha-L-Fuc-(1-&gt;3)]-beta-D-GlcNAc-(1-&gt;3)-beta-D-Gal-(1-&gt;4)-[alpha-L-Fuc-(1-&gt;3)]-beta-D-GlcNAc derivative + GDP + H(+). The catalysed reaction is a neolactoside nLc6Cer + GDP-beta-L-fucose = beta-D-Gal-(1-&gt;4)-[alpha-L-Fuc-(1-&gt;3)]-beta-D-GlcNAc-(1-&gt;3)-beta-D-Gal-(1-&gt;4)-beta-D-GlcNAc-(1-&gt;3)-beta-D-Gal-(1-&gt;4)-beta-D-Glc-(1&lt;-&gt;1')-Cer + GDP + H(+). It catalyses the reaction a neolactoside nLc6Cer + GDP-beta-L-fucose = beta-D-galactosyl-(1-&gt;4)-N-acetyl-beta-D-glucosaminyl-(1-&gt;3)-beta-D-galactosyl-(1-&gt;4)-[alpha-L-fucosyl-(1-&gt;3)]-N-acetyl-beta-D-glucosaminyl-(1-&gt;3)-beta-D-galactosyl-(1-&gt;4)-beta-D-glucosyl-(1&lt;-&gt;1')-ceramide + GDP + H(+). The enzyme catalyses a neolactoside VI(3)-alpha-NeuNAc-nLc6Cer + GDP-beta-L-fucose = a neolactoside VI(3)-alpha-NeuAc,V(3)-alphaFuc-nLc6Cer + GDP + H(+). It carries out the reaction beta-D-galactosyl-(1-&gt;4)-N-acetyl-D-glucosamine + GDP-beta-L-fucose = beta-D-galactosyl-(1-&gt;4)-[alpha-L-fucosyl-(1-&gt;3)]-N-acetyl-D-glucosamine + GDP + H(+). The catalysed reaction is N-acetyl-alpha-neuraminosyl-(2-&gt;3)-beta-D-galactosyl-(1-&gt;4)-N-acetyl-beta-D-glucosamine + GDP-beta-L-fucose = N-acetyl-alpha-neuraminosyl-(2-&gt;3)-beta-D-galactosyl-(1-&gt;4)-[alpha-L-fucosyl-(1-&gt;3)]-N-acetyl-beta-D-glucosamine + GDP + H(+). It catalyses the reaction lactose + GDP-beta-L-fucose = beta-D-galactosyl-(1-&gt;4)-[alpha-L-fucosyl-(1-&gt;3)]-D-glucose + GDP + H(+). The enzyme catalyses alpha-L-Fuc-(1-&gt;2)-beta-D-Gal-(1-&gt;4)-D-Glc + GDP-beta-L-fucose = alpha-L-Fuc-(1-&gt;2)-beta-D-Gal-(1-&gt;4)-[alpha-L-Fuc-(1-&gt;3)]-D-Glc + GDP + H(+). It carries out the reaction a beta-D-galactosyl-(1-&gt;4)-N-acetyl-beta-D-6-sulfooxy-glucosaminyl derivative + GDP-beta-L-fucose = a beta-D-galactosyl-(1-&gt;4)-[alpha-L-fucosyl-(1-&gt;3)]-N-acetyl-beta-D-6-sulfooxy-glucosaminyl derivative + GDP + H(+). The protein operates within protein modification; protein glycosylation. Its function is as follows. Catalyzes the transfer of L-fucose, from a guanosine diphosphate-beta-L-fucose, to the N-acetyl glucosamine (GlcNAc) of a distal alpha2,3 sialylated lactosamine unit of a glycoprotein- or glycolipid-linked sialopolylactosamines chain or of a distal or internal lactosamine unit of a neutral glycoprotein- or glycolipid-linked polylactosamines chain through an alpha-1,3 glycosidic linkage and participates in surface expression of the sialyl Lewis X (sLe(x)), Lewis X (Le(x)) and non sialylated VIM2 determinants. Moreover transfers fucose to H-type 2 (Fucalpha1-2Galbeta1-4GlcNAc) chain acceptor substrates and participates in difucosylated sialyl Lewis x determinants. Also fucosylates a polylactosamine substrate having a 6 sulfate modification at the GlcNAc moiety and gives rise to sialyl and non-sialyl 6-sulfo lewis X. Does not have activity towards type 1 ((Galbeta1-3GlcNAc)) and H-type 1 chain (Fucalpha1-2Galbeta1-3GlcNAc) acceptors substrates. This is 4-galactosyl-N-acetylglucosaminide 3-alpha-L-fucosyltransferase FUT6 from Gorilla gorilla gorilla (Western lowland gorilla).